We begin with the raw amino-acid sequence, 151 residues long: MKVILKETIDTLGIVGTEWDVAPGYARNYLFPQGKAIEATPQNRKIIQQAKAKFDLQIAKERKLAQEMAERLKNVECTIKAKVHEEFRLYGSITSHDIKDALNAQNIILERRTILLPEPIRETGEYKVPIRLYKDVEPEITVKVVPEEKTQ.

This sequence belongs to the bacterial ribosomal protein bL9 family.

Binds to the 23S rRNA. This chain is Large ribosomal subunit protein bL9, found in Desulforapulum autotrophicum (strain ATCC 43914 / DSM 3382 / VKM B-1955 / HRM2) (Desulfobacterium autotrophicum).